We begin with the raw amino-acid sequence, 588 residues long: MFS siderochrome iron transporter 1 (588 aa).

The next 13 membrane-spanning stretches (helical) occupy residues glutamine 60–valine 80, leucine 104–alanine 124, proline 133–cysteine 153, alanine 161–isoleucine 181, alanine 191–leucine 211, tyrosine 225–tryptophan 245, isoleucine 278–tyrosine 298, serine 307–tyrosine 327, leucine 348–phenylalanine 368, tyrosine 385–valine 405, tryptophan 413–phenylalanine 433, isoleucine 440–threonine 460, and tyrosine 473–valine 495. Residue asparagine 519 is glycosylated (N-linked (GlcNAc...) asparagine). The helical transmembrane segment at lysine 552–tryptophan 572 threads the bilayer.

This sequence belongs to the major facilitator superfamily.

The protein localises to the membrane. In terms of biological role, major facilitator transporter involved in siderophore transport. In Ajellomyces capsulatus (Darling's disease fungus), this protein is MFS siderochrome iron transporter 1.